We begin with the raw amino-acid sequence, 73 residues long: Protein RALF-like 10 (73 aa).

The signal sequence occupies residues 1–17 (MKALVICLLVIFAAVIA). Intrachain disulfides connect Cys35–Cys44 and Cys64–Cys70.

The protein belongs to the plant rapid alkalinization factor (RALF) family. In terms of tissue distribution, expressed in flowers.

Its subcellular location is the secreted. Cell signaling peptide that may regulate plant stress, growth, and development. Mediates a rapid alkalinization of extracellular space by mediating a transient increase in the cytoplasmic Ca(2+) concentration leading to a calcium-dependent signaling events through a cell surface receptor and a concomitant activation of some intracellular mitogen-activated protein kinases. The protein is Protein RALF-like 10 (RALFL10) of Arabidopsis thaliana (Mouse-ear cress).